A 638-amino-acid polypeptide reads, in one-letter code: Golgin subfamily A member 8S (638 aa).

The segment covering 1 to 11 has biased composition (pro residues); that stretch reads MWPQARLPPHP. Positions 1–84 are disordered; that stretch reads MWPQARLPPH…GESPTSSATL (84 aa). A compositionally biased stretch (polar residues) spans 50 to 62; the sequence is TNGSIHETATSGG. 3 coiled-coil regions span residues 105-160, 223-275, and 318-417; these read VSQL…LNTD, LEQS…MSQE, and EAEL…QQKQ. Disordered stretches follow at residues 427–453, 510–532, and 556–575; these read ALPG…PSIP, KDAA…DEAA, and AHNP…ELGA. Basic and acidic residues predominate over residues 434 to 446; sequence GGGHLDSEGEEAP. The span at 514-525 shows a compositional bias: gly residues; it reads LGGGHHQAGAQG. The segment covering 561 to 574 has biased composition (low complexity); it reads DEPGPGAPAPQELG.

Belongs to the GOLGA8 family.

This Homo sapiens (Human) protein is Golgin subfamily A member 8S.